A 155-amino-acid chain; its full sequence is Endoribonuclease YbeY (155 aa).

Residues His-114, His-118, and His-124 each contribute to the Zn(2+) site.

The protein belongs to the endoribonuclease YbeY family. Requires Zn(2+) as cofactor.

Its subcellular location is the cytoplasm. Its function is as follows. Single strand-specific metallo-endoribonuclease involved in late-stage 70S ribosome quality control and in maturation of the 3' terminus of the 16S rRNA. In Shigella flexneri serotype 5b (strain 8401), this protein is Endoribonuclease YbeY.